We begin with the raw amino-acid sequence, 813 residues long: LPS-assembly protein LptD (813 aa).

The segment at 1 to 29 (MTEQRRSPNNRALPSPAPTSVPARARRAG) is disordered. The first 52 residues, 1–52 (MTEQRRSPNNRALPSPAPTSVPARARRAGGLHAGALRPLVLAMASLSAGAHA), serve as a signal peptide directing secretion.

It belongs to the LptD family. As to quaternary structure, component of the lipopolysaccharide transport and assembly complex. Interacts with LptE and LptA.

The protein resides in the cell outer membrane. In terms of biological role, together with LptE, is involved in the assembly of lipopolysaccharide (LPS) at the surface of the outer membrane. The sequence is that of LPS-assembly protein LptD from Cupriavidus necator (strain ATCC 17699 / DSM 428 / KCTC 22496 / NCIMB 10442 / H16 / Stanier 337) (Ralstonia eutropha).